The chain runs to 249 residues: Triosephosphate isomerase (249 aa).

9 to 11 (NWK) serves as a coordination point for substrate. Catalysis depends on His-94, which acts as the Electrophile. The active-site Proton acceptor is Glu-166. Substrate is bound by residues Gly-172, Ser-211, and 232–233 (GG).

Belongs to the triosephosphate isomerase family. Homodimer.

The protein resides in the cytoplasm. It catalyses the reaction D-glyceraldehyde 3-phosphate = dihydroxyacetone phosphate. It participates in carbohydrate biosynthesis; gluconeogenesis. The protein operates within carbohydrate degradation; glycolysis; D-glyceraldehyde 3-phosphate from glycerone phosphate: step 1/1. Its function is as follows. Involved in the gluconeogenesis. Catalyzes stereospecifically the conversion of dihydroxyacetone phosphate (DHAP) to D-glyceraldehyde-3-phosphate (G3P). The chain is Triosephosphate isomerase from Chromohalobacter salexigens (strain ATCC BAA-138 / DSM 3043 / CIP 106854 / NCIMB 13768 / 1H11).